A 587-amino-acid polypeptide reads, in one-letter code: Tripartite motif-containing protein 29 (587 aa).

Positions methionine 1–serine 71 are disordered. Phosphoserine is present on residues serine 21, serine 28, serine 58, and serine 104. Tyrosine 106 carries the post-translational modification Phosphotyrosine. The segment at phenylalanine 220 to valine 260 adopts a B box-type zinc-finger fold. Residues cysteine 225, histidine 228, cysteine 247, and histidine 252 each coordinate Zn(2+). Positions threonine 259–aspartate 348 form a coiled coil. Threonine 476 carries the phosphothreonine modification. Phosphoserine is present on serine 489.

Interacts with VIM and HINT1. Interacts with IKBKG/NEMO. Interacts with STING1.

The protein resides in the cytoplasm. The protein localises to the lysosome. Its function is as follows. Plays a crucial role in the regulation of macrophage activation in response to viral or bacterial infections within the respiratory tract. Mechanistically, TRIM29 interacts with IKBKG/NEMO in the lysosome where it induces its 'Lys-48' ubiquitination and subsequent degradation. In turn, the expression of type I interferons and the production of pro-inflammatory cytokines are inhibited. Additionally, induces the 'Lys-48' ubiquitination of STING1 in a similar way, leading to its degradation. This chain is Tripartite motif-containing protein 29 (Trim29), found in Mus musculus (Mouse).